A 968-amino-acid polypeptide reads, in one-letter code: RNA polymerase-associated protein RapA (968 aa).

Residues D164 to D334 form the Helicase ATP-binding domain. D177–T184 lines the ATP pocket. A DEAH box motif is present at residues D280–H283. One can recognise a Helicase C-terminal domain in the interval R490 to Y643.

It belongs to the SNF2/RAD54 helicase family. RapA subfamily. In terms of assembly, interacts with the RNAP. Has a higher affinity for the core RNAP than for the holoenzyme. Its ATPase activity is stimulated by binding to RNAP.

Its function is as follows. Transcription regulator that activates transcription by stimulating RNA polymerase (RNAP) recycling in case of stress conditions such as supercoiled DNA or high salt concentrations. Probably acts by releasing the RNAP, when it is trapped or immobilized on tightly supercoiled DNA. Does not activate transcription on linear DNA. Probably not involved in DNA repair. The chain is RNA polymerase-associated protein RapA from Erwinia tasmaniensis (strain DSM 17950 / CFBP 7177 / CIP 109463 / NCPPB 4357 / Et1/99).